A 489-amino-acid polypeptide reads, in one-letter code: Glutamyl-tRNA(Gln) amidotransferase subunit A (489 aa).

Residues Lys79 and Ser158 each act as charge relay system in the active site. The active-site Acyl-ester intermediate is the Ser182.

This sequence belongs to the amidase family. GatA subfamily. As to quaternary structure, heterotrimer of A, B and C subunits.

The catalysed reaction is L-glutamyl-tRNA(Gln) + L-glutamine + ATP + H2O = L-glutaminyl-tRNA(Gln) + L-glutamate + ADP + phosphate + H(+). Allows the formation of correctly charged Gln-tRNA(Gln) through the transamidation of misacylated Glu-tRNA(Gln) in organisms which lack glutaminyl-tRNA synthetase. The reaction takes place in the presence of glutamine and ATP through an activated gamma-phospho-Glu-tRNA(Gln). The protein is Glutamyl-tRNA(Gln) amidotransferase subunit A of Anaplasma marginale (strain Florida).